The following is a 579-amino-acid chain: Tricyclene synthase 0e23, chloroplastic (579 aa).

The N-terminal 66 residues, 1-66, are a transit peptide targeting the chloroplast; the sequence is MAFCISYLGA…ALCLNAHSTS (66 aa). N-linked (GlcNAc...) asparagine glycans are attached at residues Asn-27, Asn-204, and Asn-317. Mg(2+)-binding residues include Asp-336 and Asp-340. A DDXXD motif motif is present at residues 336–340; it reads DDIFD. 2 N-linked (GlcNAc...) asparagine glycosylation sites follow: Asn-382 and Asn-463. Mg(2+) contacts are provided by Asn-480 and Glu-488. A glycan (N-linked (GlcNAc...) asparagine) is linked at Asn-507.

It belongs to the terpene synthase family. Tpsg subfamily. Mg(2+) serves as cofactor. The cofactor is Mn(2+). In terms of tissue distribution, accumulates in flowers; mostly expressed in both upper and lower petal lobes, and, to a lower extent, in tube and stamens.

It is found in the plastid. The protein resides in the chloroplast stroma. The catalysed reaction is (2E)-geranyl diphosphate = tricyclene + diphosphate. It carries out the reaction (2E)-geranyl diphosphate = (E)-beta-ocimene + diphosphate. It participates in secondary metabolite biosynthesis; terpenoid biosynthesis. In terms of biological role, contributes to floral scent emission. This is Tricyclene synthase 0e23, chloroplastic (0e23) from Antirrhinum majus (Garden snapdragon).